The chain runs to 174 residues: Small ribosomal subunit protein uS5 (174 aa).

The region spanning 16–79 (FSELIVSVRR…NAAKKNMIRV (64 aa)) is the S5 DRBM domain.

Belongs to the universal ribosomal protein uS5 family. As to quaternary structure, part of the 30S ribosomal subunit. Contacts proteins S4 and S8.

In terms of biological role, with S4 and S12 plays an important role in translational accuracy. Its function is as follows. Located at the back of the 30S subunit body where it stabilizes the conformation of the head with respect to the body. In Ehrlichia canis (strain Jake), this protein is Small ribosomal subunit protein uS5.